Consider the following 195-residue polypeptide: A-type ATP synthase subunit E (195 aa).

The protein belongs to the V-ATPase E subunit family. As to quaternary structure, has multiple subunits with at least A(3), B(3), C, D, E, F, H, I and proteolipid K(x).

It is found in the cell membrane. In terms of biological role, component of the A-type ATP synthase that produces ATP from ADP in the presence of a proton gradient across the membrane. This Halobacterium salinarum (strain ATCC 29341 / DSM 671 / R1) protein is A-type ATP synthase subunit E.